Here is a 254-residue protein sequence, read N- to C-terminus: MTGLSSPGDALLRFEPLTEGVLLKRYKRFLADVELSSGETVTAHCANTGPMTGVLIPGQRVRLRYAPSPKRKLAWTWEQAEVPGADGQHCWVGINTALPNRLIRATVEAGCLEAQLGAIARIRAEVAYGTNKRSRIDLLLTPAEQNPDQRPIYLEVKNTTWTDGSTALFPDTVTERGQKHLIELMGVLPDARAVLVPCLSRPDVTAFAPGDSADPRYGELFRQATNSGVEVLPCCFSFSADAVHWQGTRLVDLG.

Belongs to the SfsA family.

This is Sugar fermentation stimulation protein homolog from Synechococcus sp. (strain CC9605).